Reading from the N-terminus, the 124-residue chain is Small ribosomal subunit protein uS12 (124 aa).

At Asp-89 the chain carries 3-methylthioaspartic acid.

This sequence belongs to the universal ribosomal protein uS12 family. As to quaternary structure, part of the 30S ribosomal subunit. Contacts proteins S8 and S17. May interact with IF1 in the 30S initiation complex.

With S4 and S5 plays an important role in translational accuracy. In terms of biological role, interacts with and stabilizes bases of the 16S rRNA that are involved in tRNA selection in the A site and with the mRNA backbone. Located at the interface of the 30S and 50S subunits, it traverses the body of the 30S subunit contacting proteins on the other side and probably holding the rRNA structure together. The combined cluster of proteins S8, S12 and S17 appears to hold together the shoulder and platform of the 30S subunit. The polypeptide is Small ribosomal subunit protein uS12 (Pectobacterium atrosepticum (strain SCRI 1043 / ATCC BAA-672) (Erwinia carotovora subsp. atroseptica)).